The sequence spans 506 residues: U3 small nucleolar RNA-associated protein 18 homolog (506 aa).

Positions methionine 1–glutamate 11 are enriched in acidic residues. Disordered regions lie at residues methionine 1 to lysine 44 and alanine 69 to histidine 126. The span at glutamate 24–isoleucine 37 shows a compositional bias: basic and acidic residues. 4 positions are modified to phosphoserine: serine 102, serine 104, serine 164, and serine 165. 4 WD repeats span residues tyrosine 203–leucine 242, lysine 331–isoleucine 370, methionine 372–alanine 413, and glutamate 469–glycine 505.

The protein belongs to the WD repeat UTP18 family. As to quaternary structure, component of U3 snoRNP complex.

It localises to the nucleus. It is found in the nucleolus. Functionally, component of a nucleolar small nuclear ribonucleoprotein particle (snoRNP) thought to participate in the processing and modification of pre-ribosomal RNA. Regulation of cell size by ribosome synthesis is an important parameter for stem cell maintenance and function. The polypeptide is U3 small nucleolar RNA-associated protein 18 homolog (wcd) (Drosophila melanogaster (Fruit fly)).